Here is a 138-residue protein sequence, read N- to C-terminus: Small ribosomal subunit protein uS11c (138 aa).

Positions 1–23 are disordered; it reads MAKPILRIGSRKNTRSGSRKNVR. The span at 9-23 shows a compositional bias: basic residues; sequence GSRKNTRSGSRKNVR.

It belongs to the universal ribosomal protein uS11 family. Part of the 30S ribosomal subunit.

The protein resides in the plastid. The protein localises to the chloroplast. This is Small ribosomal subunit protein uS11c from Barbarea verna (Land cress).